Here is a 318-residue protein sequence, read N- to C-terminus: Gamma-glutamyl hydrolase (318 aa).

Residues 1–24 (MARLGRLLSVLGLVLCGATGLGLS) form the signal peptide. One can recognise a Gamma-glutamyl hydrolase domain in the interval 25–318 (APPAPTPKKP…SSFQQSYIFD (294 aa)). N-linked (GlcNAc...) asparagine glycosylation is present at N116. The active-site Nucleophile is C134. N-linked (GlcNAc...) asparagine glycosylation is found at N163 and N203. The active-site Proton donor is the H244. N307 is a glycosylation site (N-linked (GlcNAc...) asparagine).

Belongs to the peptidase C26 family. As to quaternary structure, homodimer.

The protein localises to the secreted. Its subcellular location is the extracellular space. It is found in the lysosome. It localises to the melanosome. The catalysed reaction is (6S)-5,6,7,8-tetrahydrofolyl-(gamma-L-Glu)(n) + (n-1) H2O = (6S)-5,6,7,8-tetrahydrofolate + (n-1) L-glutamate. Functionally, hydrolyzes the polyglutamate sidechains of pteroylpolyglutamates. Progressively removes gamma-glutamyl residues from pteroylpoly-gamma-glutamate to yield pteroyl-alpha-glutamate (folic acid) and free glutamate. May play an important role in the bioavailability of dietary pteroylpolyglutamates and in the metabolism of pteroylpolyglutamates and antifolates. Exhibits either endo- or exopeptidase activity depending upon the tissue of origin. When secreted, it acts primarily as an endopeptidase. This is Gamma-glutamyl hydrolase (GGH) from Bos taurus (Bovine).